Here is a 723-residue protein sequence, read N- to C-terminus: Catalase-peroxidase (723 aa).

Residues 97–225 (WHAAGSYRVT…LAAVQMGLIY (129 aa)) constitute a cross-link (tryptophyl-tyrosyl-methioninium (Trp-Tyr) (with M-251)). His98 (proton acceptor) is an active-site residue. Residues 225–251 (YVNPEGVNGKSDPLATAAQMRETFARM) constitute a cross-link (tryptophyl-tyrosyl-methioninium (Tyr-Met) (with W-97)). Position 266 (His266) interacts with heme b.

The protein belongs to the peroxidase family. Peroxidase/catalase subfamily. Homodimer or homotetramer. It depends on heme b as a cofactor. In terms of processing, formation of the three residue Trp-Tyr-Met cross-link is important for the catalase, but not the peroxidase activity of the enzyme.

It carries out the reaction H2O2 + AH2 = A + 2 H2O. The catalysed reaction is 2 H2O2 = O2 + 2 H2O. Functionally, bifunctional enzyme with both catalase and broad-spectrum peroxidase activity. The protein is Catalase-peroxidase of Agrobacterium fabrum (strain C58 / ATCC 33970) (Agrobacterium tumefaciens (strain C58)).